The following is a 320-amino-acid chain: Cytochrome f (320 aa).

The N-terminal stretch at 1-35 is a signal peptide; sequence MQTRNTLSWIREEITRSISVSLMIYIITWASISSA. Tyr-36, Cys-56, Cys-59, and His-60 together coordinate heme. The chain crosses the membrane as a helical span at residues 286 to 306; that stretch reads VQGLLFFLGSVVLAQIFLVLK.

The protein belongs to the cytochrome f family. As to quaternary structure, the 4 large subunits of the cytochrome b6-f complex are cytochrome b6, subunit IV (17 kDa polypeptide, petD), cytochrome f and the Rieske protein, while the 4 small subunits are PetG, PetL, PetM and PetN. The complex functions as a dimer. The cofactor is heme.

It is found in the plastid. Its subcellular location is the chloroplast thylakoid membrane. Component of the cytochrome b6-f complex, which mediates electron transfer between photosystem II (PSII) and photosystem I (PSI), cyclic electron flow around PSI, and state transitions. The polypeptide is Cytochrome f (Olimarabidopsis pumila (Dwarf rocket)).